The sequence spans 78 residues: Acyl carrier protein (78 aa).

The Carrier domain maps to 1–76 (MSLEDDVKLI…DVITYIKTRQ (76 aa)). S36 is subject to O-(pantetheine 4'-phosphoryl)serine.

This sequence belongs to the acyl carrier protein (ACP) family. 4'-phosphopantetheine is transferred from CoA to a specific serine of apo-ACP by AcpS. This modification is essential for activity because fatty acids are bound in thioester linkage to the sulfhydryl of the prosthetic group.

Its subcellular location is the cytoplasm. The protein operates within lipid metabolism; fatty acid biosynthesis. Carrier of the growing fatty acid chain in fatty acid biosynthesis. The sequence is that of Acyl carrier protein from Chlamydia felis (strain Fe/C-56) (Chlamydophila felis).